The primary structure comprises 104 residues: Ig kappa chain b5 variant C region (104 aa).

Positions 5–100 (PTVLIFPPSP…SGSPVVQSFS (96 aa)) constitute an Ig-like domain. Residues cysteine 26 and cysteine 85 are joined by a disulfide bond.

This is Ig kappa chain b5 variant C region from Oryctolagus cuniculus (Rabbit).